The sequence spans 500 residues: Melanopsin (500 aa).

The Extracellular segment spans residues 1–65 (MSHHSSWRGH…TVDVPDHAHY (65 aa)). Asn18 is a glycosylation site (N-linked (GlcNAc...) asparagine). Residues 66-86 (IIGAVILIVGITGVIGNALVI) form a helical membrane-spanning segment. The Cytoplasmic portion of the chain corresponds to 87–101 (YVFCRSRTLRTAGNM). The helical transmembrane segment at 102 to 122 (FVVNLAVADFFMSLTQSPVFF) threads the bilayer. Over 123-138 (AASLHRRWIFGERICE) the chain is Extracellular. A disulfide bridge connects residues Cys137 and Cys215. A helical transmembrane segment spans residues 139–159 (LYAFCGALFGICSMMTLTAIA). At 160-182 (ADRCLAITQPLALVGNVSRRKAG) the chain is on the cytoplasmic side. Residues 183 to 203 (AVLAVVWLYSLGWSLPPFFGW) traverse the membrane as a helical segment. The Extracellular portion of the chain corresponds to 204 to 232 (SAYVPEGLQTSCSWDYMTFTPSVRAYTIL). The helical transmembrane segment at 233–253 (LFIFVFFIPLGIIVSCYVGIF) threads the bilayer. At 254–286 (QAIRAMGKEIRELDCGETQKVYERMQNEWKMAK) the chain is on the cytoplasmic side. Residues 287–307 (IALLVILLFVISWSPYSVVAL) traverse the membrane as a helical segment. Topologically, residues 308 to 322 (TATAGYSHLLTPYMN) are extracellular. The chain crosses the membrane as a helical span at residues 323–343 (SVPAVIAKASAIHNPIIYAIT). At Lys330 the chain carries N6-(retinylidene)lysine. Over 344–500 (HPKYRAAIAR…DGKALLLGGN (157 aa)) the chain is Cytoplasmic. Disordered stretches follow at residues 406 to 428 (GKKR…ADGS), 448 to 470 (VILS…AHKV), and 481 to 500 (ETDS…LGGN). 2 stretches are compositionally biased toward polar residues: residues 411 to 428 (SSAS…ADGS) and 448 to 462 (VILS…ASGQ).

It belongs to the G-protein coupled receptor 1 family. Opsin subfamily. Expressed in a subset of retinal horizontal cells as well as in retinal ganglion cells.

It is found in the cell membrane. Functionally, photoreceptor implicated in non-image-forming responses to light. This chain is Melanopsin (opn4), found in Rutilus rutilus (Roach).